The following is a 563-amino-acid chain: Putative inactive polypeptide N-acetylgalactosaminyltransferase 12 (563 aa).

Over 1-6 (MEVFAS) the chain is Cytoplasmic. A helical; Signal-anchor for type II membrane protein transmembrane segment spans residues 7-29 (VLNCCFKYIVLPVWIFIVLLLLH). At 30–563 (RDLSSWDGLM…SVMQSANILV (534 aa)) the chain is on the lumenal side. An N-linked (GlcNAc...) asparagine glycan is attached at Asn-50. An intrachain disulfide couples Cys-97 to Cys-334. The segment at 109 to 225 (MKPASIIMIF…NGWLSPLLDT (117 aa)) is catalytic subdomain A. The catalytic subdomain B stretch occupies residues 280 to 342 (PYEVAAVRTS…PCSRVGHLQP (63 aa)). N-linked (GlcNAc...) asparagine glycans are attached at residues Asn-389 and Asn-428. The 117-residue stretch at 433–549 (ASGHVKTLEF…ANGKQRWILD (117 aa)) folds into the Ricin B-type lectin domain. The cysteines at positions 446 and 461 are disulfide-linked. 2 N-linked (GlcNAc...) asparagine glycosylation sites follow: Asn-464 and Asn-469. 2 disulfides stabilise this stretch: Cys-485/Cys-499 and Cys-523/Cys-537. A glycan (N-linked (GlcNAc...) asparagine) is linked at Asn-552.

This sequence belongs to the glycosyltransferase 2 family. GalNAc-T subfamily.

It is found in the golgi apparatus membrane. Its function is as follows. Probable inactive glycosyltransferase. The sequence is that of Putative inactive polypeptide N-acetylgalactosaminyltransferase 12 (pgant12) from Drosophila melanogaster (Fruit fly).